A 231-amino-acid polypeptide reads, in one-letter code: Female protein (231 aa).

Positions 1–19 are cleaved as a signal peptide; that stretch reads MDKMLLLLGVSILLSEVFA. In terms of domain architecture, Pentraxin (PTX) spans 24 to 223; that stretch reads TGKVFVFPRE…YAVIRPRCVA (200 aa). Residue N51 is glycosylated (N-linked (GlcNAc...) asparagine). The cysteines at positions 55 and 114 are disulfide-linked. Residues D77, N78, E155, Q156, D157, and Q167 each coordinate Ca(2+).

It belongs to the pentraxin family. In terms of assembly, homopentamer. Pentraxin (or pentaxin) have a discoid arrangement of 5 non-covalently bound subunits. Ca(2+) serves as cofactor.

It is found in the secreted. The protein is Female protein of Nothocricetulus migratorius (Gray dwarf hamster).